A 330-amino-acid chain; its full sequence is Aspartate--ammonia ligase (330 aa).

It belongs to the class-II aminoacyl-tRNA synthetase family. AsnA subfamily.

The protein resides in the cytoplasm. It carries out the reaction L-aspartate + NH4(+) + ATP = L-asparagine + AMP + diphosphate + H(+). It functions in the pathway amino-acid biosynthesis; L-asparagine biosynthesis; L-asparagine from L-aspartate (ammonia route): step 1/1. The polypeptide is Aspartate--ammonia ligase (Aeromonas salmonicida (strain A449)).